Consider the following 112-residue polypeptide: Large ribosomal subunit protein uL22 (112 aa).

This sequence belongs to the universal ribosomal protein uL22 family. As to quaternary structure, part of the 50S ribosomal subunit.

Its function is as follows. This protein binds specifically to 23S rRNA; its binding is stimulated by other ribosomal proteins, e.g. L4, L17, and L20. It is important during the early stages of 50S assembly. It makes multiple contacts with different domains of the 23S rRNA in the assembled 50S subunit and ribosome. Functionally, the globular domain of the protein is located near the polypeptide exit tunnel on the outside of the subunit, while an extended beta-hairpin is found that lines the wall of the exit tunnel in the center of the 70S ribosome. In Moorella thermoacetica (strain ATCC 39073 / JCM 9320), this protein is Large ribosomal subunit protein uL22.